Consider the following 170-residue polypeptide: MKMNQLLEAFWYILPAYFANSSPVVLGGGTPIDFGKKWRDGRRILGDGKTWRGFFGGLIVGTIIGIVQYFLLPEYYGSLGIAIELAFLLSLGTLVGDLIGSFIKRRLNMPRGYPAVGLDQWGFLIAALCFAYPVKTIPTGEVLFLLVITPLIHWGANIFAYKMGWKKVPW.

5 helical membrane-spanning segments follow: residues 9-29, 53-73, 79-99, 114-134, and 140-160; these read AFWYILPAYFANSSPVVLGGG, GFFGGLIVGTIIGIVQYFLLP, LGIAIELAFLLSLGTLVGDLI, PAVGLDQWGFLIAALCFAYPV, and GEVLFLLVITPLIHWGANIFA.

It belongs to the CDP-archaeol synthase family. It depends on Mg(2+) as a cofactor.

It is found in the cell membrane. The enzyme catalyses 2,3-bis-O-(geranylgeranyl)-sn-glycerol 1-phosphate + CTP + H(+) = CDP-2,3-bis-O-(geranylgeranyl)-sn-glycerol + diphosphate. It participates in membrane lipid metabolism; glycerophospholipid metabolism. Its function is as follows. Catalyzes the formation of CDP-2,3-bis-(O-geranylgeranyl)-sn-glycerol (CDP-archaeol) from 2,3-bis-(O-geranylgeranyl)-sn-glycerol 1-phosphate (DGGGP) and CTP. This reaction is the third ether-bond-formation step in the biosynthesis of archaeal membrane lipids. This is CDP-archaeol synthase from Pyrococcus horikoshii (strain ATCC 700860 / DSM 12428 / JCM 9974 / NBRC 100139 / OT-3).